Here is a 425-residue protein sequence, read N- to C-terminus: Histone-binding protein RBBP4 (425 aa).

Alanine 2 carries the post-translational modification N-acetylalanine. Lysine 4 is subject to N6-acetyllysine; alternate. Lysine 4 participates in a covalent cross-link: Glycyl lysine isopeptide (Lys-Gly) (interchain with G-Cter in SUMO2); alternate. Residue lysine 4 forms a Glycyl lysine isopeptide (Lys-Gly) (interchain with G-Cter in ubiquitin); alternate linkage. WD repeat units follow at residues 32-125 (YDLV…NHEG), 126-175 (EVNR…RLRG), 176-223 (HQKE…KTIF), 225-270 (GHTA…HSVD), 271-314 (AHTA…HSFE), 315-371 (SHKD…FIHG), and 372-404 (GHTAKISDFSWNPNEPWVICSVSEDNIMQVWQM). Position 110 is a phosphoserine (serine 110). The residue at position 160 (lysine 160) is an N6-acetyllysine; alternate. A Glycyl lysine isopeptide (Lys-Gly) (interchain with G-Cter in SUMO2); alternate cross-link involves residue lysine 160. A Phosphoserine modification is found at serine 355.

The protein belongs to the WD repeat RBAP46/RBAP48/MSI1 family. Binds directly to helix 1 of the histone fold of histone H4, a region that is not accessible when H4 is in chromatin. Subunit of the chromatin assembly factor 1 (CAF-1) complex, which is composed of RBBP4, CHAF1B and CHAF1A. Subunit of the core histone deacetylase (HDAC) complex, which is composed of HDAC1, HDAC2, RBBP4 and RBBP7. The core HDAC complex associates with SIN3A, ARID4B/SAP180, SAP18, SAP30, SAP130, SUDS3/SAP45 and possibly ARID4A/RBP1 and ING1 to form the SIN3 HDAC complex. Component of the nucleosome remodeling and deacetylase (NuRD) repressor complex, composed of core proteins MTA1, MTA2, MTA3, RBBP4, RBBP7, HDAC1, HDAC2, MBD2, MBD3, and peripherally associated proteins CDK2AP1, CDK2AP2, GATAD2A, GATAD2B, CHD3, CHD4 and CHD5. The exact stoichiometry of the NuRD complex is unknown, and some subunits such as MBD2 and MBD3, GATAD2A and GATAD2B, and CHD3, CHD4 and CHD5 define mutually exclusive NuRD complexes. Interacts with ZNF512B; the interaction is direct and may play a role in repressing gene expression. The NuRD complex may also interact with MBD3L1 and MBD3L2. Component of the PRC2 complex, which consists of the core subunits EED, EZH1 or EZH2, SUZ12, and RBBP4, and various combinations of accessory subunits including AEBP2, JARID2, PHF19, MTF2 and EPOP. Forms a monomeric PRC2.2 (class 2) complex consisting of at least SUZ12, RBBP4, AEBP2 and JARID2. Forms a dimeric PRC2.1 (class 1, PRC-PCL) complex consisting of at least SUZ12, RBBP4, and PHF19; PHF19 stabilizes the dimeric structure which enhances PRC2 interaction with chromatin. Component of the NURF-1 ISWI chromatin remodeling complex (also called the nucleosome-remodeling factor (NURF) complex) at least composed of SMARCA1 (isoform 2), BPTF, RBBP4 and RBBP7. Within the complex interacts with isoform 2 of SMARCA1. Component of the BPFT-SMARCA1 complex at least composed of SMARCA1 (isoform 1), BPFT, RBBP4 and RBBP7; the complex is catalytically inactive and does not remodel chromatin. Within the complex interacts with isoform 1 of SMARCA1. Interacts with the ISWI chromatin remodeling complex component SMARCA5; the interaction is direct. Interacts with the viral protein-binding domain of the retinoblastoma protein (RB1). Component of the DREAM complex (also named LINC complex) at least composed of E2F4, E2F5, LIN9, LIN37, LIN52, LIN54, MYBL1, MYBL2, RBL1, RBL2, RBBP4, TFDP1 and TFDP2. The complex exists in quiescent cells where it represses cell cycle-dependent genes. It dissociates in S phase when LIN9, LIN37, LIN52 and LIN54 form a subcomplex that binds to MYBL2. Found in a complex composed of at least SINHCAF, SIN3A, HDAC1, SAP30, RBBP4, OGT and TET1. Interacts with ZNF827; the interaction is direct and recruits RBBP4 to telomeres. Interacts with MTA1; the interaction is direct and mutually exclusive with binding histone H4. Interacts with ARMC12 (via ARM domains). Interacts with BRCA1. Interacts with CDK2AP1. Interacts with CREBBP, and this interaction may be enhanced by the binding of phosphorylated CREB1 to CREBBP. Interacts with ERCC6. Interacts with HDAC7. Interacts with PHF6. Interacts with PWWP2B. Interacts with SPEN/MINT. Interacts with SUV39H1.

It localises to the nucleus. It is found in the chromosome. The protein resides in the telomere. Core histone-binding subunit that may target chromatin assembly factors, chromatin remodeling factors and histone deacetylases to their histone substrates in a manner that is regulated by nucleosomal DNA. Component of the chromatin assembly factor 1 (CAF-1) complex, which is required for chromatin assembly following DNA replication and DNA repair. Component of the core histone deacetylase (HDAC) complex, which promotes histone deacetylation and consequent transcriptional repression. Component of the nucleosome remodeling and histone deacetylase complex (the NuRD complex), which promotes transcriptional repression by histone deacetylation and nucleosome remodeling. Component of the PRC2 complex, which promotes repression of homeotic genes during development. Component of the NURF (nucleosome remodeling factor) complex. This is Histone-binding protein RBBP4 (RBBP4) from Bos taurus (Bovine).